Reading from the N-terminus, the 238-residue chain is 4-hydroxy-tetrahydrodipicolinate reductase (238 aa).

12 to 17 (GASGRM) provides a ligand contact to NAD(+). An NADP(+)-binding site is contributed by R40. NAD(+)-binding positions include 93 to 95 (GTT) and 117 to 120 (ASNF). H149 acts as the Proton donor/acceptor in catalysis. Residue H150 participates in (S)-2,3,4,5-tetrahydrodipicolinate binding. K153 (proton donor) is an active-site residue. 159-160 (GT) contacts (S)-2,3,4,5-tetrahydrodipicolinate.

Belongs to the DapB family.

The protein resides in the cytoplasm. The enzyme catalyses (S)-2,3,4,5-tetrahydrodipicolinate + NAD(+) + H2O = (2S,4S)-4-hydroxy-2,3,4,5-tetrahydrodipicolinate + NADH + H(+). It catalyses the reaction (S)-2,3,4,5-tetrahydrodipicolinate + NADP(+) + H2O = (2S,4S)-4-hydroxy-2,3,4,5-tetrahydrodipicolinate + NADPH + H(+). Its pathway is amino-acid biosynthesis; L-lysine biosynthesis via DAP pathway; (S)-tetrahydrodipicolinate from L-aspartate: step 4/4. Its function is as follows. Catalyzes the conversion of 4-hydroxy-tetrahydrodipicolinate (HTPA) to tetrahydrodipicolinate. This Xanthomonas campestris pv. campestris (strain 8004) protein is 4-hydroxy-tetrahydrodipicolinate reductase.